Reading from the N-terminus, the 451-residue chain is MAKYFGTDGVRGVANKELTPELAFKLGRYGGYVLAHNEGEKHPKVLVGRDTRVSGEMLESALIAGLISIGAEVMRLGVISTPGVAYLTREMEADLGVMISASHNPVPDNGIKFFGSDGFKLSDDQEQEIEHLLDQDNPDLPRPVGEDIVHYSDYFEGAQKYISYLKSTVDVDLAGMKIALDGAHGSTSSLAPFLFGDLEADTVTIGCNPNGYNINQEVGSTHPESLAKVVVESECDFGLAFDGDGDRLIAIDEKGNIVDGDQIMFIIGQAMSKNQELNNNMIVSTVMSNLGFYKALENEGIQSNKTKVGDRYVVEEMRRGNYNLGGEQSGHIVLMDYNTTGDGLLTGVQLASIIKMTGKSLSQLTSQMKKYPQSLVNVRVTDKYRVEENIDVQEIMTKVEVEMNGEGRILVRPSGTEPLVRVMVEAATDEDAQRYANTIAEVVQDKMGLDN.

Ser102 functions as the Phosphoserine intermediate in the catalytic mechanism. Mg(2+) contacts are provided by Ser102, Asp242, Asp244, and Asp246. Ser102 carries the phosphoserine modification.

It belongs to the phosphohexose mutase family. It depends on Mg(2+) as a cofactor. Post-translationally, activated by phosphorylation.

It catalyses the reaction alpha-D-glucosamine 1-phosphate = D-glucosamine 6-phosphate. Catalyzes the conversion of glucosamine-6-phosphate to glucosamine-1-phosphate. The protein is Phosphoglucosamine mutase of Staphylococcus saprophyticus subsp. saprophyticus (strain ATCC 15305 / DSM 20229 / NCIMB 8711 / NCTC 7292 / S-41).